The following is a 299-amino-acid chain: Prohibitin-2 (299 aa).

Position 2 is an N-acetylalanine (alanine 2). The necessary for transcriptional repression stretch occupies residues 19 to 49; sequence MGTALKLLLGAGAVAYGVRESVFTVEGGHRA. Tyrosine 128 carries the phosphotyrosine modification. The residue at position 147 (lysine 147) is an N6-acetyllysine. The segment at 150 to 174 is necessary for transcriptional repression; sequence ASQLITQRAQVSLLIRRELTERAKD. Serine 151 is modified (phosphoserine). Residues 190-238 are a coiled coil; sequence SREYTAAVEAKQVAQQEAQRAQFLVEKAKQEQRQKIVQAEGEAEAAKML. An N6-acetyllysine mark is found at lysine 200, lysine 236, lysine 250, and lysine 262.

This sequence belongs to the prohibitin family. In terms of assembly, the mitochondrial prohibitin complex consists of two subunits (PHB1 and PHB2), assembled into a membrane-associated ring-shaped supercomplex of approximately 1 mDa. Interacts with ESR1, HDAC1 and HDAC5. Interacts with ZNF703. Interacts with STOML2. Interacts with ARFGEF3. Interacts with SPHK2. Interacts with COX4I1; the interaction associates PHB2 with COX. Interacts with MAP1LC3B (membrane-bound form LC3-II); the interaction is direct and upon mitochondrial depolarization and proteasome-dependent outer membrane rupture. Interacts with IGFBP6 (via C-terminal domain). Interacts with CLPB. Interacts with CD86 (via cytoplasmic domain); the interactions increases after priming with CD40. Interacts with AFG3L2. Interacts with DNAJC19. Interacts with AKT2; this interaction may be important for myogenic differentiation. Post-translationally, phosphorylated. Tyrosine phosphorylation is indirectly stimulated by IGFBP6.

It is found in the mitochondrion inner membrane. The protein resides in the cytoplasm. It localises to the nucleus. Its subcellular location is the cell membrane. In terms of biological role, protein with pleiotropic attributes mediated in a cell-compartment- and tissue-specific manner, which include the plasma membrane-associated cell signaling functions, mitochondrial chaperone, and transcriptional co-regulator of transcription factors and sex steroid hormones in the nucleus. In the mitochondria, together with PHB, forms large ring complexes (prohibitin complexes) in the inner mitochondrial membrane (IMM) and functions as a chaperone protein that stabilizes mitochondrial respiratory enzymes and maintains mitochondrial integrity in the IMM, which is required for mitochondrial morphogenesis, neuronal survival, and normal lifespan. The prohibitin complex, with DNAJC19, regulates cardiolipin remodeling and the protein turnover of OMA1 in a cardiolipin-binding manner. Also regulates cytochrome-c oxidase assembly (COX) and mitochondrial respiration. Binding to sphingoid 1-phosphate (SPP) modulates its regulator activity. Has a key role of mitophagy receptor involved in targeting mitochondria for autophagic degradation. Involved in mitochondrial-mediated antiviral innate immunity, activates RIG-I-mediated signal transduction and production of IFNB1 and pro-inflammatory cytokine IL6. Its function is as follows. In the nucleus, serves as transcriptional co-regulator. Acts as a mediator of transcriptional repression by nuclear hormone receptors via recruitment of histone deacetylases. Functions as an estrogen receptor (ER)-selective coregulator that potentiates the inhibitory activities of antiestrogens and represses the activity of estrogens. Competes with NCOA1 for modulation of ER transcriptional activity. Functionally, in the plasma membrane, is involved in IGFBP6-induced cell migration. Cooperates with CD86 to mediate CD86-signaling in B lymphocytes that regulates the level of IgG1 produced through the activation of distal signaling intermediates. Upon CD40 engagement, required to activate NF-kappa-B signaling pathway via phospholipase C and protein kinase C activation. This Rattus norvegicus (Rat) protein is Prohibitin-2.